The chain runs to 259 residues: Probable iron export permease protein FetB (259 aa).

Over 1-5 the chain is Periplasmic; the sequence is MNSHN. A helical transmembrane segment spans residues 6–26; sequence ITNESLALALMLVVVAILISH. At 27 to 35 the chain is on the cytoplasmic side; sequence KEKLALEKD. 2 consecutive transmembrane segments (helical) span residues 36–56 and 57–77; these read ILWSVGRAIIQLIIVGYVLKY and IFSVDDASLTLLMVLFICFNA. Residues 78–91 are Cytoplasmic-facing; it reads AWNAQKRSKYIAKA. The chain crosses the membrane as a helical span at residues 92-112; the sequence is FISSFIAITVGAGITLAVLIL. Residues 113–117 are Periplasmic-facing; the sequence is SGSIE. The helical transmembrane segment at 118-138 threads the bilayer; the sequence is FIPMQVIPIAGMIAGNAMVAV. Residues 139–191 are Cytoplasmic-facing; sequence GLCYNNLGQRVISEQQQIQEKLSLGATPKQASAILIRDSIRAALIPTVDSAKT. A helical transmembrane segment spans residues 192–212; sequence VGLVSLPGMMSGLIFAGIDPV. The Periplasmic segment spans residues 213 to 218; that stretch reads KAIKYQ. A helical membrane pass occupies residues 219-239; sequence IMVTFMLLSTASLSTIIACYL. The Cytoplasmic portion of the chain corresponds to 240–259; sequence TYRKFYNSRHQLVVTQLKKK.

The protein belongs to the UPF0014 family. As to quaternary structure, the complex is composed of two ATP-binding proteins (FetA) and two transmembrane proteins (FetB).

The protein localises to the cell inner membrane. Functionally, part of the ABC transporter complex FetAB, which is probably involved in iron export and enhances resistance to H(2)O(2)-mediated oxidative stress. Probably responsible for the translocation of the substrate across the membrane. The chain is Probable iron export permease protein FetB (fetB) from Escherichia coli (strain K12).